The chain runs to 363 residues: Homeobox protein Hox-A2 (363 aa).

Disordered stretches follow at residues 23-133 (TSFP…SRRL) and 183-216 (MKHK…DEEK). Polar residues-rich tracts occupy residues 31 to 46 (TFQS…SHST) and 55 to 78 (TIPS…NGTS). The short motif at 88–93 (EYPWMK) is the Antp-type hexapeptide element. The segment at residues 130–189 (SRRLRTAYTNTQLLELEKEFHFNKYLCRPRRVEIAALLDLTERQVKVWFQNRRMKHKRQT) is a DNA-binding region (homeobox).

Belongs to the Antp homeobox family. Proboscipedia subfamily.

It localises to the nucleus. Functionally, sequence-specific transcription factor which is part of a developmental regulatory system that provides cells with specific positional identities on the anterior-posterior axis. The chain is Homeobox protein Hox-A2 (HOXA2) from Heterodontus francisci (Horn shark).